A 462-amino-acid chain; its full sequence is Argininosuccinate lyase (462 aa).

The protein belongs to the lyase 1 family. Argininosuccinate lyase subfamily.

Its subcellular location is the cytoplasm. It carries out the reaction 2-(N(omega)-L-arginino)succinate = fumarate + L-arginine. The protein operates within amino-acid biosynthesis; L-arginine biosynthesis; L-arginine from L-ornithine and carbamoyl phosphate: step 3/3. The protein is Argininosuccinate lyase of Methylobacterium nodulans (strain LMG 21967 / CNCM I-2342 / ORS 2060).